We begin with the raw amino-acid sequence, 123 residues long: MVVQDPLLCDLPIQVTLEEVNSQIALEYGQAMTVRVCKMDGEVMPVVVVQNATVLDLKKAIQRYVQLRQEREGGIQHISWSYVWRTYHLTSAGEKLTEDRKKLRDYGIRNRDEVSFIKKLRQK.

Residues 32-123 (MTVRVCKMDG…VSFIKKLRQK (92 aa)) enclose the Ubiquitin-like domain.

Component of the U11/U12 snRNPs that are part of the U12-type spliceosome.

It localises to the nucleus. The chain is U11/U12 small nuclear ribonucleoprotein 25 kDa protein (SNRNP25) from Bos taurus (Bovine).